The following is a 981-amino-acid chain: Calsyntenin-1 (981 aa).

A signal peptide spans 1–28 (MLRRPAPALAPAARLLLAGLLCGGGVWA). Residues 29-859 (ARVNKHKPWL…PHPFAVVPST (831 aa)) lie on the Extracellular side of the membrane. Cadherin domains are found at residues 38 to 164 (LEPT…APVF) and 165 to 265 (KEKS…TPGW). Residues asparagine 346, asparagine 366, and asparagine 515 are each glycosylated (N-linked (GlcNAc...) asparagine). Residues 860-880 (ATVVIVVCVSFLVFMIILGVF) traverse the membrane as a helical segment. The Cytoplasmic portion of the chain corresponds to 881–981 (RIRAAHRRTM…LEWDDSTLSY (101 aa)). The segment at 915 to 981 (METYEDQHSS…LEWDDSTLSY (67 aa)) is disordered. Residues 925–960 (EEEEEEEEEEESEDGEEEDDITSAESESSEEEEGEQ) show a composition bias toward acidic residues. Polar residues predominate over residues 962 to 981 (DPQNATRQQQLEWDDSTLSY).

Belongs to the calsyntenin family. In terms of assembly, directly interacts with APBA2. Forms a tripartite complex with APBA2 and APP. Interacts with KLC1. As to quaternary structure, interacts with APBB1; this interaction stabilizes AlcICD metabolism. Interacts with PSEN1. Proteolytically processed under normal cellular conditions. A primary zeta-cleavage generates a large extracellular (soluble) N-terminal domain (sAlc) and a short C-terminal transmembrane fragment (CTF1). A secondary cleavage catalyzed by presenilin gamma-secretase within the transmembrane domain releases the beta-Alc-alpha chain in the extracellular milieu and produces an intracellular fragment (AlcICD). This processing is strongly suppressed in the tripartite complex formed with APBA2 and APP, which seems to prevent the association with PSEN1. Expressed in the brain and, a lower level, in the heart, skeletal muscle, kidney and placenta. Accumulates in dystrophic neurites around the amyloid core of Alzheimer disease senile plaques (at protein level).

It is found in the postsynaptic cell membrane. It localises to the endoplasmic reticulum membrane. Its subcellular location is the golgi apparatus membrane. The protein resides in the cell projection. The protein localises to the neuron projection. It is found in the nucleus. In terms of biological role, postsynaptic adhesion molecule that binds to presynaptic neurexins to mediate both excitatory and inhibitory synapse formation. Promotes synapse development by acting as a cell adhesion molecule at the postsynaptic membrane, which associates with neurexin-alpha at the presynaptic membrane. Also functions as a cargo in axonal anterograde transport by acting as a molecular adapter that promotes KLC1 association with vesicles. Complex formation with APBA2 and APP, stabilizes APP metabolism and enhances APBA2-mediated suppression of beta-APP40 secretion, due to the retardation of intracellular APP maturation. As intracellular fragment AlcICD, suppresses APBB1-dependent transactivation stimulated by APP C-terminal intracellular fragment (AICD), most probably by competing with AICD for APBB1-binding. Its function is as follows. In complex with APBA2 and C99, a C-terminal APP fragment, abolishes C99 interaction with PSEN1 and thus APP C99 cleavage by gamma-secretase, most probably through stabilization of the direct interaction between APBA2 and APP. This is Calsyntenin-1 from Homo sapiens (Human).